The chain runs to 259 residues: Putative carbamate hydrolase RutD (259 aa).

This sequence belongs to the AB hydrolase superfamily. Hydrolase RutD family.

It carries out the reaction carbamate + 2 H(+) = NH4(+) + CO2. Its function is as follows. Involved in pyrimidine catabolism. May facilitate the hydrolysis of carbamate, a reaction that can also occur spontaneously. The protein is Putative carbamate hydrolase RutD of Pseudomonas syringae pv. syringae (strain B728a).